A 102-amino-acid chain; its full sequence is NADH-quinone oxidoreductase subunit K 2 (102 aa).

3 helical membrane passes run 4–24 (ITPVHYLALSAALLLIGTVGV), 30–50 (IVIILMSIELILNAVNINLIA), and 62–82 (IFAIFVITDAVAEAAVGLGIL).

This sequence belongs to the complex I subunit 4L family. As to quaternary structure, NDH-1 is composed of 14 different subunits. Subunits NuoA, H, J, K, L, M, N constitute the membrane sector of the complex.

The protein resides in the cell inner membrane. The catalysed reaction is a quinone + NADH + 5 H(+)(in) = a quinol + NAD(+) + 4 H(+)(out). Functionally, NDH-1 shuttles electrons from NADH, via FMN and iron-sulfur (Fe-S) centers, to quinones in the respiratory chain. The immediate electron acceptor for the enzyme in this species is believed to be ubiquinone. Couples the redox reaction to proton translocation (for every two electrons transferred, four hydrogen ions are translocated across the cytoplasmic membrane), and thus conserves the redox energy in a proton gradient. The protein is NADH-quinone oxidoreductase subunit K 2 of Solibacter usitatus (strain Ellin6076).